Consider the following 426-residue polypeptide: Serine--tRNA ligase (426 aa).

Residue Thr-233–Glu-235 coordinates L-serine. Arg-264–Glu-266 contributes to the ATP binding site. L-serine is bound at residue Glu-287. Glu-351 to Ser-354 contacts ATP. Position 387 (Ser-387) interacts with L-serine.

The protein belongs to the class-II aminoacyl-tRNA synthetase family. Type-1 seryl-tRNA synthetase subfamily. Homodimer. The tRNA molecule binds across the dimer.

The protein resides in the cytoplasm. The catalysed reaction is tRNA(Ser) + L-serine + ATP = L-seryl-tRNA(Ser) + AMP + diphosphate + H(+). The enzyme catalyses tRNA(Sec) + L-serine + ATP = L-seryl-tRNA(Sec) + AMP + diphosphate + H(+). It participates in aminoacyl-tRNA biosynthesis; selenocysteinyl-tRNA(Sec) biosynthesis; L-seryl-tRNA(Sec) from L-serine and tRNA(Sec): step 1/1. Functionally, catalyzes the attachment of serine to tRNA(Ser). Is also able to aminoacylate tRNA(Sec) with serine, to form the misacylated tRNA L-seryl-tRNA(Sec), which will be further converted into selenocysteinyl-tRNA(Sec). In Clostridium novyi (strain NT), this protein is Serine--tRNA ligase.